Consider the following 119-residue polypeptide: Large ribosomal subunit protein uL18 (119 aa).

Belongs to the universal ribosomal protein uL18 family. As to quaternary structure, part of the 50S ribosomal subunit; part of the 5S rRNA/L5/L18/L25 subcomplex. Contacts the 5S and 23S rRNAs.

This is one of the proteins that bind and probably mediate the attachment of the 5S RNA into the large ribosomal subunit, where it forms part of the central protuberance. This chain is Large ribosomal subunit protein uL18, found in Staphylococcus aureus (strain Mu3 / ATCC 700698).